The sequence spans 784 residues: Toll-like receptor 2 (784 aa).

An N-terminal signal peptide occupies residues 1–20; it reads MPHALWTVWVLGAVISLSKE. Over 21–587 the chain is Extracellular; that stretch reads GVPDQPSSLS…THLSVSECHR (567 aa). Cysteine 31 and cysteine 37 are disulfide-bonded. LRR repeat units follow at residues 54 to 77, 78 to 101, 102 to 125, 126 to 150, 151 to 175, 176 to 199, 200 to 223, 224 to 250, 251 to 278, 279 to 308, 309 to 337, 338 to 361, 362 to 388, 389 to 414, 415 to 437, 438 to 457, 458 to 478, 479 to 500, and 501 to 524; these read AVKS…WKCV, NLKA…SSLR, SLEH…RPLS, SLKF…SHLT, NLRI…GLTF, LEEL…SIQN, ISHL…TLSS, LEYL…TNTL, IKKF…YISG, VSEA…VIGK, LETL…LTER, VKRI…HLKS, LEYL…AWPS, LQTL…TLKN, LTKL…WPEK, MKYL…CIPQ, TLEV…ILPQ, VKEL…FLPM, and LLVM…SFQK. The N-linked (GlcNAc...) asparagine glycan is linked to asparagine 115. An N-linked (GlcNAc...) asparagine glycan is attached at asparagine 199. Cysteine 353 and cysteine 382 are disulfide-bonded. Asparagine 414 carries an N-linked (GlcNAc...) asparagine glycan. An intrachain disulfide couples cysteine 432 to cysteine 454. The N-linked (GlcNAc...) asparagine glycan is linked to asparagine 442. One can recognise an LRRCT domain in the interval 525-579; sequence LKTLEAGGNNFICSCEFLSFTQEEQALDQILIDWPENYLCDSPSHVRGQRVQDTH. The chain crosses the membrane as a helical span at residues 588 to 608; it reads TALVSAVCCALFLSILLTGVL. Residues 609-784 are Cytoplasmic-facing; sequence CHHFHGLWYM…WLNLRAAIKS (176 aa). Positions 639 to 782 constitute a TIR domain; it reads ICYDAFVSYS…GFWLNLRAAI (144 aa). Lysine 754 is covalently cross-linked (Glycyl lysine isopeptide (Lys-Gly) (interchain with G-Cter in ubiquitin)). Positions 761 to 778 match the ATG16L1-binding motif motif; it reads YLEWPTDEAQQEGFWLNL.

This sequence belongs to the Toll-like receptor family. In terms of assembly, interacts with LY96, TLR1 and TLR6 (via extracellular domain). TLR2 seems to exist in heterodimers with either TLR1 or TLR6 before stimulation by the ligand. The heterodimers form bigger oligomers in response to their corresponding ligands as well as further heterotypic associations with other receptors such as CD14 and/or CD36. Binds MYD88 (via TIR domain). Interacts with TICAM1. Interacts with CNPY3. Interacts with ATG16L1. Interacts with PPP1R11. Interacts with TICAM2. Interacts with TIRAP. Ubiquitinated at Lys-754 by PPP1R11, leading to its degradation. Deubiquitinated by USP2. In terms of processing, glycosylation of Asn-442 is critical for secretion of the N-terminal ectodomain of TLR2.

It is found in the membrane. The protein localises to the cytoplasmic vesicle. It localises to the phagosome membrane. Its subcellular location is the membrane raft. Cooperates with LY96 to mediate the innate immune response to bacterial lipoproteins and other microbial cell wall components. Cooperates with TLR1 or TLR6 to mediate the innate immune response to bacterial lipoproteins or lipopeptides. Acts via MYD88 and TRAF6, leading to NF-kappa-B activation, cytokine secretion and the inflammatory response. May also promote apoptosis in response to lipoproteins. Forms activation clusters composed of several receptors depending on the ligand, these clusters trigger signaling from the cell surface and subsequently are targeted to the Golgi in a lipid-raft dependent pathway. Forms the cluster TLR2:TLR6:CD14:CD36 in response to diacylated lipopeptides and TLR2:TLR1:CD14 in response to triacylated lipopeptides. The protein is Toll-like receptor 2 (TLR2) of Equus caballus (Horse).